The chain runs to 1644 residues: Peroxisome proliferator-activated receptor gamma coactivator-related protein 1 (1644 aa).

7 disordered regions span residues 1–61, 170–249, 429–616, 646–761, 773–884, 978–1074, and 1322–1507; these read MAAR…DSSF, PERD…EVAG, LTPK…TSPV, AADP…PETP, SAPA…QPPG, STVS…EGVV, and AAPP…NDHY. Residues 12 to 22 are compositionally biased toward pro residues; the sequence is APPPTGGPGPD. Low complexity predominate over residues 213–222; that stretch reads SSPKLPSWRP. Ser232 is modified (phosphoserine). A necessary for interaction with CREB1 and NRF1 and for transcriptional coactivation region spans residues 425-460; sequence IMESLTPKEPQSLPASASQGSQKVPRKGRKKKNKEQ. Residues 437–446 are compositionally biased toward polar residues; that stretch reads LPASASQGSQ. Basic residues predominate over residues 448-457; it reads VPRKGRKKKN. The span at 475–496 shows a compositional bias: polar residues; sequence SSRGQSTVSAEVNSQAGSSQKQ. Positions 515–524 are enriched in low complexity; the sequence is RAWARAWAAA. A Phosphoserine modification is found at Ser541. The segment covering 556-572 has biased composition (polar residues); sequence ETSQANPTLSLNDSAQA. A compositionally biased stretch (basic and acidic residues) spans 691-702; that stretch reads DHPKVVSPEGKD. The segment covering 811-821 has biased composition (polar residues); that stretch reads MVSTHSEQVSS. 2 stretches are compositionally biased toward pro residues: residues 828–864 and 874–884; these read VRPP…PLLP and RLPPPPLQPPG. A phosphoserine mark is found at Ser1059, Ser1393, and Ser1395. Residues 1361-1432 form a necessary for interaction with CREB1 and NRF1 region; it reads EASPCRSEMN…SSSSSVSSSS (72 aa). 2 stretches are compositionally biased toward low complexity: residues 1409 to 1433 and 1453 to 1489; these read SRSV…SSSR and SSCS…VSPC. Residues 1523–1599 enclose the RRM domain; the sequence is RVVFIGKIPG…QPFDLCFGGR (77 aa).

Interacts with CREB1 and NRF1. In terms of tissue distribution, expressed in liver, heart, skeletal muscle, kidney and white and brown adipose tissues.

It is found in the nucleus. In terms of biological role, acts as a coactivator during transcriptional activation of nuclear genes related to mitochondrial biogenesis and cell growth. Involved in the transcription coactivation of CREB and NRF1 target genes. In Mus musculus (Mouse), this protein is Peroxisome proliferator-activated receptor gamma coactivator-related protein 1 (Pprc1).